A 108-amino-acid polypeptide reads, in one-letter code: Nucleoid-associated protein PSPTO_3645 (108 aa).

Positions 85 to 96 (QASQDKTASMTA) are enriched in polar residues. The interval 85–108 (QASQDKTASMTAGMQLPPGMKLPF) is disordered.

The protein belongs to the YbaB/EbfC family. Homodimer.

The protein localises to the cytoplasm. The protein resides in the nucleoid. Its function is as follows. Binds to DNA and alters its conformation. May be involved in regulation of gene expression, nucleoid organization and DNA protection. This Pseudomonas syringae pv. tomato (strain ATCC BAA-871 / DC3000) protein is Nucleoid-associated protein PSPTO_3645.